The chain runs to 69 residues: Cytochrome c oxidase subunit 8A, mitochondrial (69 aa).

A mitochondrion-targeting transit peptide spans 1–25 (MSVLTPLLLRGLTGSARRLPVPRAK). The SIFI-degron motif lies at 2 to 19 (SVLTPLLLRGLTGSARRL). Over 26–36 (IHSLPPDEKLG) the chain is Mitochondrial matrix. Residues 37–60 (IMELAVGLTSCFVTFLLPAGWILS) form a helical membrane-spanning segment. Residues 61-69 (HLETYRRPE) are Mitochondrial intermembrane-facing.

The protein belongs to the cytochrome c oxidase VIII family. As to quaternary structure, component of the cytochrome c oxidase (complex IV, CIV), a multisubunit enzyme composed of 14 subunits. The complex is composed of a catalytic core of 3 subunits MT-CO1, MT-CO2 and MT-CO3, encoded in the mitochondrial DNA, and 11 supernumerary subunits COX4I, COX5A, COX5B, COX6A, COX6B, COX6C, COX7A, COX7B, COX7C, COX8 and NDUFA4, which are encoded in the nuclear genome. The complex exists as a monomer or a dimer and forms supercomplexes (SCs) in the inner mitochondrial membrane with NADH-ubiquinone oxidoreductase (complex I, CI) and ubiquinol-cytochrome c oxidoreductase (cytochrome b-c1 complex, complex III, CIII), resulting in different assemblies (supercomplex SCI(1)III(2)IV(1) and megacomplex MCI(2)III(2)IV(2)). In response to mitochondrial stress, the precursor protein is ubiquitinated by the SIFI complex in the cytoplasm before mitochondrial import, leading to its degradation. Within the SIFI complex, UBR4 initiates ubiquitin chain that are further elongated or branched by KCMF1.

The protein resides in the mitochondrion inner membrane. It functions in the pathway energy metabolism; oxidative phosphorylation. In terms of biological role, component of the cytochrome c oxidase, the last enzyme in the mitochondrial electron transport chain which drives oxidative phosphorylation. The respiratory chain contains 3 multisubunit complexes succinate dehydrogenase (complex II, CII), ubiquinol-cytochrome c oxidoreductase (cytochrome b-c1 complex, complex III, CIII) and cytochrome c oxidase (complex IV, CIV), that cooperate to transfer electrons derived from NADH and succinate to molecular oxygen, creating an electrochemical gradient over the inner membrane that drives transmembrane transport and the ATP synthase. Cytochrome c oxidase is the component of the respiratory chain that catalyzes the reduction of oxygen to water. Electrons originating from reduced cytochrome c in the intermembrane space (IMS) are transferred via the dinuclear copper A center (CU(A)) of subunit 2 and heme A of subunit 1 to the active site in subunit 1, a binuclear center (BNC) formed by heme A3 and copper B (CU(B)). The BNC reduces molecular oxygen to 2 water molecules using 4 electrons from cytochrome c in the IMS and 4 protons from the mitochondrial matrix. The protein is Cytochrome c oxidase subunit 8A, mitochondrial (COX8A) of Gorilla gorilla gorilla (Western lowland gorilla).